A 281-amino-acid polypeptide reads, in one-letter code: Type VI secretion system accessory component TagJ (281 aa).

Interacts with TssB1 (via N-terminus). Interacts with ClpV1.

In terms of biological role, component of the H1 type VI (H1-T6SS) secretion system that plays a role in the release of toxins targeting both eukaryotic and prokaryotic species. Forms a stable complex with TssB1. This complex, although not crucial for the H1-T6SS function, may fine-tune the assembly of the system. Plays a role in the interaction between ClpV1 and the TssC1/TssB1 sheath. This is Type VI secretion system accessory component TagJ from Pseudomonas aeruginosa (strain ATCC 15692 / DSM 22644 / CIP 104116 / JCM 14847 / LMG 12228 / 1C / PRS 101 / PAO1).